The primary structure comprises 154 residues: MITVIQRTGSARVRVGGEVVGEIERGLVALVCAVHGDGSAQAQRLAERVLGYRVFPDAEGRMNGSALDLGCGVLAVPQFTLAADTRKGMRPSFGPAADPQTGQALFETFLEALRERATGPVASGVFGADMQVELVNDGPVTFWLEAPPRPAGPV.

Positions Gly-138–Pro-139 match the Gly-cisPro motif, important for rejection of L-amino acids motif.

Belongs to the DTD family. In terms of assembly, homodimer.

It localises to the cytoplasm. The enzyme catalyses glycyl-tRNA(Ala) + H2O = tRNA(Ala) + glycine + H(+). It carries out the reaction a D-aminoacyl-tRNA + H2O = a tRNA + a D-alpha-amino acid + H(+). Functionally, an aminoacyl-tRNA editing enzyme that deacylates mischarged D-aminoacyl-tRNAs. Also deacylates mischarged glycyl-tRNA(Ala), protecting cells against glycine mischarging by AlaRS. Acts via tRNA-based rather than protein-based catalysis; rejects L-amino acids rather than detecting D-amino acids in the active site. By recycling D-aminoacyl-tRNA to D-amino acids and free tRNA molecules, this enzyme counteracts the toxicity associated with the formation of D-aminoacyl-tRNA entities in vivo and helps enforce protein L-homochirality. This chain is D-aminoacyl-tRNA deacylase, found in Halorhodospira halophila (strain DSM 244 / SL1) (Ectothiorhodospira halophila (strain DSM 244 / SL1)).